A 346-amino-acid polypeptide reads, in one-letter code: 26S proteasome non-ATPase regulatory subunit 4 (346 aa).

A VWFA domain is found at 5 to 190 (STMICVDNSE…LTDALLQSSV (186 aa)). UIM domains lie at 216-235 (ENDPDLALALRVSMEEERAR) and 273-292 (TEEQQLEWALRLSMQENAPA). The tract at residues 290-346 (APAEQPQVQHEQMDVDGAPAVGGDNLDDLMNNPELLQQIVDDLPAANAEKDDDKEKK) is disordered. Basic and acidic residues predominate over residues 337–346 (AEKDDDKEKK).

This sequence belongs to the proteasome subunit S5A family. The 26S proteasome is composed of a core protease, known as the 20S proteasome, capped at one or both ends by the 19S regulatory complex (RC). The RC is composed of at least 18 different subunits in two subcomplexes, the base and the lid, which form the portions proximal and distal to the 20S proteolytic core, respectively. Broadly expressed with high expression in the pharynx, intestine, hypodermis and spermatheca and weak expression in the excretory cell, body wall muscle, vulva and somatic gonad.

It localises to the cytoplasm. The protein localises to the nucleus. Binds and presumably selects ubiquitin-conjugates for destruction. Required for protein degradation and ubiquitin-proteasome system (UBS) function and regulates proteasomal subunit expression. Involvement in UBS might be cell type specific. Regulator of the autophagy-lysosome pathway that may confer resistance to autophagy by regulating the expression of autophagy-related proteins such as lgg-1, and by regulating lysosome formation, possibly by modulating elt-2 activity. Required for fertility, sperm production, and sex determination through regulation of tra-2 protein. Plays a role in the elimination of paternal mitochondria in fertilized eggs. This is 26S proteasome non-ATPase regulatory subunit 4 from Caenorhabditis elegans.